We begin with the raw amino-acid sequence, 237 residues long: KH homology domain-containing protein 1 (237 aa).

The next 2 membrane-spanning stretches (helical) occupy residues 7–29 (RLFRVLFVIETVSEYGVLIFIYG) and 33–50 (LQTLAMLLIGTVSFHLWI). Positions 96–155 (PMVFHMEEDQEELIFGHGDTYLRCIEVHSHTLIQLESWFTATGQTRVTVVGPHRARQWLL) constitute a KH; atypical domain.

This sequence belongs to the KHDC1 family.

The protein resides in the membrane. In Homo sapiens (Human), this protein is KH homology domain-containing protein 1.